The sequence spans 362 residues: Alpha-2-HS-glycoprotein (362 aa).

A signal peptide spans 1–15 (LILFFCLAQLWGCRA). The Cystatin fetuin-A-type 1 domain maps to 24-130 (YREPACDDVE…QFSVLFAKCD (107 aa)). Intrachain disulfides connect cysteine 29/cysteine 353, cysteine 86/cysteine 97, cysteine 111/cysteine 129, cysteine 143/cysteine 146, cysteine 205/cysteine 216, and cysteine 227/cysteine 244. Asparagine 96 carries an N-linked (GlcNAc...) asparagine glycan. Phosphoserine is present on residues serine 131, serine 132, and serine 135. Positions 141 to 252 (KVCPNCPLLA…TCTVFQTQPV (112 aa)) constitute a Cystatin fetuin-A-type 2 domain. Residues asparagine 153 and asparagine 173 are each glycosylated (N-linked (GlcNAc...) asparagine). Phosphoserine occurs at positions 314, 318, 321, and 323. A glycan (O-linked (GalNAc...) threonine) is linked at threonine 332.

The protein belongs to the fetuin family. In terms of processing, phosphorylated by FAM20C in the extracellular medium. In terms of tissue distribution, expressed by the liver and secreted in plasma.

The protein resides in the secreted. In Sus scrofa (Pig), this protein is Alpha-2-HS-glycoprotein (AHSG).